Here is a 546-residue protein sequence, read N- to C-terminus: Methionine--tRNA ligase (546 aa).

The 'HIGH' region motif lies at 15-25 (PYANGPIHLGH). Positions 146, 149, 159, and 162 each coordinate Zn(2+). A 'KMSKS' region motif is present at residues 332–336 (KMSKS). Residue Lys-335 coordinates ATP.

It belongs to the class-I aminoacyl-tRNA synthetase family. MetG type 1 subfamily. In terms of assembly, monomer. The cofactor is Zn(2+).

The protein localises to the cytoplasm. It carries out the reaction tRNA(Met) + L-methionine + ATP = L-methionyl-tRNA(Met) + AMP + diphosphate. Functionally, is required not only for elongation of protein synthesis but also for the initiation of all mRNA translation through initiator tRNA(fMet) aminoacylation. This chain is Methionine--tRNA ligase, found in Coxiella burnetii (strain RSA 331 / Henzerling II).